The following is a 587-amino-acid chain: Bifunctional dihydrofolate reductase-thymidylate synthase (587 aa).

The region spanning 9–237 is the DHFR domain; it reads DIYAICACCK…TTLDFIIYSK (229 aa). 36-42 is a binding site for NADP(+); it reads GIGNAGV. Substrate is bound at residue D51. Residues 108–110 and 129–132 each bind NADP(+); these read KKS and LSRT. Residues I173, Y179, and T194 each coordinate substrate. 174–181 is a binding site for NADP(+); the sequence is GGSSVYKE. The tract at residues 301 to 587 is thymidylate synthase; it reads NHPEYQYLNI…HDKINMDMAA (287 aa). R324 lines the dUMP pocket. The active site involves C469. Residues H470, 488–492, N500, and 530–532 each bind dUMP; these read QRSCD and HVY.

In the N-terminal section; belongs to the dihydrofolate reductase family. The protein in the C-terminal section; belongs to the thymidylate synthase family. As to quaternary structure, homodimer.

The enzyme catalyses (6S)-5,6,7,8-tetrahydrofolate + NADP(+) = 7,8-dihydrofolate + NADPH + H(+). The catalysed reaction is dUMP + (6R)-5,10-methylene-5,6,7,8-tetrahydrofolate = 7,8-dihydrofolate + dTMP. Its pathway is cofactor biosynthesis; tetrahydrofolate biosynthesis; 5,6,7,8-tetrahydrofolate from 7,8-dihydrofolate: step 1/1. Functionally, bifunctional enzyme. Involved in de novo dTMP biosynthesis. Key enzyme in folate metabolism. Catalyzes an essential reaction for de novo glycine and purine synthesis, DNA precursor synthesis, and for the conversion of dUMP to dTMP. This is Bifunctional dihydrofolate reductase-thymidylate synthase from Plasmodium berghei (strain Anka).